The primary structure comprises 361 residues: Cobalt-precorrin-5B C(1)-methyltransferase (361 aa).

It belongs to the CbiD family.

It catalyses the reaction Co-precorrin-5B + S-adenosyl-L-methionine = Co-precorrin-6A + S-adenosyl-L-homocysteine. The protein operates within cofactor biosynthesis; adenosylcobalamin biosynthesis; cob(II)yrinate a,c-diamide from sirohydrochlorin (anaerobic route): step 6/10. Catalyzes the methylation of C-1 in cobalt-precorrin-5B to form cobalt-precorrin-6A. In Methylorubrum extorquens (strain CM4 / NCIMB 13688) (Methylobacterium extorquens), this protein is Cobalt-precorrin-5B C(1)-methyltransferase.